The primary structure comprises 340 residues: Glyceraldehyde-3-phosphate dehydrogenase, cytosolic (340 aa).

NAD(+) is bound by residues 16 to 17 (RI), Asp-38, and Arg-85. D-glyceraldehyde 3-phosphate-binding positions include 156-158 (SCT), Thr-187, 216-217 (TG), and Arg-239. Cys-157 (nucleophile) is an active-site residue. Asn-321 serves as a coordination point for NAD(+).

The protein belongs to the glyceraldehyde-3-phosphate dehydrogenase family. In terms of assembly, homotetramer.

It localises to the cytoplasm. It catalyses the reaction D-glyceraldehyde 3-phosphate + phosphate + NAD(+) = (2R)-3-phospho-glyceroyl phosphate + NADH + H(+). The protein operates within carbohydrate degradation; glycolysis; pyruvate from D-glyceraldehyde 3-phosphate: step 1/5. In terms of biological role, key enzyme in glycolysis that catalyzes the first step of the pathway by converting D-glyceraldehyde 3-phosphate (G3P) into 3-phospho-D-glyceroyl phosphate. Essential for the maintenance of cellular ATP levels and carbohydrate metabolism. The sequence is that of Glyceraldehyde-3-phosphate dehydrogenase, cytosolic from Taxus baccata (English yew).